Here is a 96-residue protein sequence, read N- to C-terminus: Defensin-like protein 151 (96 aa).

An N-terminal signal peptide occupies residues 1 to 29; that stretch reads MKKPSQLSATILTIFVILAIGVMVKETLG. 4 disulfide bridges follow: Cys35-Cys88, Cys48-Cys68, Cys53-Cys82, and Cys57-Cys84.

It belongs to the DEFL family.

It is found in the secreted. In Arabidopsis thaliana (Mouse-ear cress), this protein is Defensin-like protein 151 (LCR17).